Consider the following 495-residue polypeptide: ATP synthase subunit beta, chloroplastic (495 aa).

Residue 172-179 (GGAGVGKT) coordinates ATP.

It belongs to the ATPase alpha/beta chains family. In terms of assembly, F-type ATPases have 2 components, CF(1) - the catalytic core - and CF(0) - the membrane proton channel. CF(1) has five subunits: alpha(3), beta(3), gamma(1), delta(1), epsilon(1). CF(0) has four main subunits: a(1), b(1), b'(1) and c(9-12).

It is found in the plastid. The protein localises to the chloroplast thylakoid membrane. The catalysed reaction is ATP + H2O + 4 H(+)(in) = ADP + phosphate + 5 H(+)(out). In terms of biological role, produces ATP from ADP in the presence of a proton gradient across the membrane. The catalytic sites are hosted primarily by the beta subunits. The sequence is that of ATP synthase subunit beta, chloroplastic from Barnardia japonica (Chinese squill).